A 79-amino-acid chain; its full sequence is Sulfur carrier protein TusA (79 aa).

The active-site Cysteine persulfide intermediate is cysteine 17.

It belongs to the sulfur carrier protein TusA family.

Its subcellular location is the cytoplasm. Sulfur carrier protein which probably makes part of a sulfur-relay system. This Pseudoalteromonas translucida (strain TAC 125) protein is Sulfur carrier protein TusA.